The primary structure comprises 103 residues: Large ribosomal subunit protein uL24 (103 aa).

The protein belongs to the universal ribosomal protein uL24 family. In terms of assembly, part of the 50S ribosomal subunit.

In terms of biological role, one of two assembly initiator proteins, it binds directly to the 5'-end of the 23S rRNA, where it nucleates assembly of the 50S subunit. One of the proteins that surrounds the polypeptide exit tunnel on the outside of the subunit. The chain is Large ribosomal subunit protein uL24 from Actinobacillus pleuropneumoniae serotype 3 (strain JL03).